Consider the following 603-residue polypeptide: Golgin subfamily A member 8B (603 aa).

4 disordered regions span residues 1–82 (MAEE…NSRS), 95–125 (LKQQ…ELEG), 398–419 (TSAE…ESSG), and 460–492 (PGDS…GAAG). Residues 46 to 66 (AASGGCHSSEASSSASSSLHA) show a composition bias toward low complexity. Positions 69-82 (SPCQEQAAVLNSRS) are enriched in polar residues. Coiled-coil stretches lie at residues 82 to 173 (SIKI…GELE) and 212 to 440 (LKGH…LELG). Residues 100–124 (KQVEHQLEEEKKANNEKQKAERELE) are compositionally biased toward basic and acidic residues. The span at 469-482 (PGGGHHQAGPGQGG) shows a compositional bias: gly residues. The golgi-targeting domain stretch occupies residues 491–603 (AGDGVAACGS…CWAWLPRRRR (113 aa)).

The protein belongs to the GOLGA8 family. As to expression, highly expressed in brain, heart and kidney. Detected at lower levels in liver, thymus, spleen, lung and peripheral blood leukocytes.

The protein localises to the golgi apparatus. It is found in the golgi stack membrane. In terms of biological role, may be involved in maintaining Golgi structure. In Homo sapiens (Human), this protein is Golgin subfamily A member 8B (GOLGA8B).